Here is a 63-residue protein sequence, read N- to C-terminus: Beta-defensin 35 (63 aa).

Residues 1 to 23 (MPQTFFVFCFLFFVFLQLFPGTG) form the signal peptide. 3 cysteine pairs are disulfide-bonded: Cys-31–Cys-58, Cys-38–Cys-52, and Cys-42–Cys-59.

It belongs to the beta-defensin family. As to expression, expressed in testis, epididymis (caput, corpus and cauda), kidney and neonatal and adult brain.

The protein localises to the secreted. In terms of biological role, has antibacterial activity. This chain is Beta-defensin 35 (Defb35), found in Mus musculus (Mouse).